We begin with the raw amino-acid sequence, 209 residues long: 2,3-bisphosphoglycerate-dependent phosphoglycerate mutase (209 aa).

Residues R8–N15, T21–G22, R60, E87–Y90, K98, R114–R115, and G158–N159 each bind substrate. H9 acts as the Tele-phosphohistidine intermediate in catalysis. Catalysis depends on E87, which acts as the Proton donor/acceptor.

This sequence belongs to the phosphoglycerate mutase family. BPG-dependent PGAM subfamily. Homodimer.

The catalysed reaction is (2R)-2-phosphoglycerate = (2R)-3-phosphoglycerate. It functions in the pathway carbohydrate degradation; glycolysis; pyruvate from D-glyceraldehyde 3-phosphate: step 3/5. Functionally, catalyzes the interconversion of 2-phosphoglycerate and 3-phosphoglycerate. The protein is 2,3-bisphosphoglycerate-dependent phosphoglycerate mutase of Rhizobium etli (strain ATCC 51251 / DSM 11541 / JCM 21823 / NBRC 15573 / CFN 42).